Consider the following 344-residue polypeptide: Putative esterase NocK (344 aa).

Positions 1 to 34 (MIGVTRRSGLALAVLVSSAACAGAEPVAPPPAPA) form a signal peptide, tat-type signal. Residues 265–295 (GGADERRREEARPAAAPGGTSTSRETCANPD) form a disordered region. Positions 266-276 (GADERRREEAR) are enriched in basic and acidic residues.

Belongs to the AB hydrolase superfamily. In terms of processing, predicted to be exported by the Tat system. The position of the signal peptide cleavage has not been experimentally proven.

The polypeptide is Putative esterase NocK (Nocardia uniformis subsp. tsuyamanensis).